Consider the following 267-residue polypeptide: Phosphatidylglycerol--prolipoprotein diacylglyceryl transferase (267 aa).

The next 7 helical transmembrane spans lie at 17 to 37 (LNIRWYGLMYILGFVAAWLLA), 56 to 76 (LVTYSVFGVILGGRLGYTLFY), 91 to 111 (IWNGGMSFHGGLLGVIIAIWL), 120 to 140 (LFEVGDFTAPLVAPGLLAGRL), 173 to 193 (QLYEAALEGVALFIILWLFSA), 199 to 219 (MAVSGMFLLLYGSFRFFVEFF), and 236 to 256 (MGQILCLPMILGGLVLVGFAM). R139 contacts a 1,2-diacyl-sn-glycero-3-phospho-(1'-sn-glycerol).

It belongs to the Lgt family.

The protein localises to the cell inner membrane. The catalysed reaction is L-cysteinyl-[prolipoprotein] + a 1,2-diacyl-sn-glycero-3-phospho-(1'-sn-glycerol) = an S-1,2-diacyl-sn-glyceryl-L-cysteinyl-[prolipoprotein] + sn-glycerol 1-phosphate + H(+). Its pathway is protein modification; lipoprotein biosynthesis (diacylglyceryl transfer). In terms of biological role, catalyzes the transfer of the diacylglyceryl group from phosphatidylglycerol to the sulfhydryl group of the N-terminal cysteine of a prolipoprotein, the first step in the formation of mature lipoproteins. The polypeptide is Phosphatidylglycerol--prolipoprotein diacylglyceryl transferase (Oleidesulfovibrio alaskensis (strain ATCC BAA-1058 / DSM 17464 / G20) (Desulfovibrio alaskensis)).